The sequence spans 576 residues: Probable vesicular glutamate transporter eat-4 (576 aa).

The Cytoplasmic segment spans residues 1-69; sequence MSSWNEAWDR…QTWIGKCRKR (69 aa). The disordered stretch occupies residues 25 to 46; sequence AAASATGAAPPQQMQEEGNENP. Positions 36–46 are enriched in polar residues; sequence QQMQEEGNENP. A helical membrane pass occupies residues 70 to 90; sequence WLLAILANMGFMISFGIRCNF. At 91-121 the chain is on the extracellular side; sequence GAAKTHMYKNYTDPYGKVHMHEFNWTIDELS. N-linked (GlcNAc...) asparagine glycosylation is found at Asn-100 and Asn-114. Residues 122–142 traverse the membrane as a helical segment; it reads VMESSYFYGYLVTQIPAGFLA. Residues 143 to 150 lie on the Cytoplasmic side of the membrane; that stretch reads AKFPPNKL. Residues 151-171 form a helical membrane-spanning segment; it reads FGFGIGVGAFLNILLPYGFKV. Topologically, residues 172–174 are extracellular; that stretch reads KSD. A helical membrane pass occupies residues 175-195; it reads YLVAFIQITQGLVQGVCYPAM. Topologically, residues 196–213 are cytoplasmic; sequence HGVWRYWAPPMERSKLAT. A helical membrane pass occupies residues 214–234; that stretch reads TAFTGSYAGAVLGLPLSAFLV. The Extracellular portion of the chain corresponds to 235–239; sequence SYVSW. The chain crosses the membrane as a helical span at residues 240-260; sequence AAPFYLYGVCGVIWAILWFCV. Over 261 to 305 the chain is Cytoplasmic; the sequence is TFEKPAFHPTISQEEKIFIEDAIGHVSNTHPTIRSIPWKAIVTSK. A helical membrane pass occupies residues 306–325; sequence PVWAIIVANFARSWTFYLLL. The Extracellular portion of the chain corresponds to 326-344; it reads QNQLTYMKEALGMKIADSG. The chain crosses the membrane as a helical span at residues 345–365; the sequence is LLAAIPHLVMGCVVLMGGQLA. The Cytoplasmic portion of the chain corresponds to 366–381; it reads DYLRSNKILSTTAVRK. A helical transmembrane segment spans residues 382 to 402; that stretch reads IFNCGGFGGEAAFMLIVAYTT. The Extracellular segment spans residues 403–406; the sequence is SDTT. Residues 407 to 427 traverse the membrane as a helical segment; it reads AIMALIAAVGMSGFAISGFNV. Over 428 to 437 the chain is Cytoplasmic; that stretch reads NHLDIAPRYA. Residues 438-458 traverse the membrane as a helical segment; the sequence is AILMGFSNGIGTLAGLTCPFV. Topologically, residues 459 to 471 are extracellular; that stretch reads TEAFTAHSKHGWT. Residues 472 to 492 traverse the membrane as a helical segment; sequence SVFLLASLIHFTGVTFYAVYA. Topologically, residues 493–576 are cytoplasmic; it reads SGELQEWAEP…VVENPHYQQW (84 aa).

Belongs to the major facilitator superfamily. Sodium/anion cotransporter family. VGLUT subfamily. Expressed in neurons of the pharynx and the extrapharyngeal nervous system. Highly expressed in male PHC sensory neurons.

It localises to the cell membrane. It is found in the synapse. Required for glutamatergic synaptic transmission. In AWB and AWC sensory neurons, required for the detection of preferred food sources, probably via glutamatergic neurotransmission from sensory neurons. Negatively regulates the turning step of male mating behavior. The protein is Probable vesicular glutamate transporter eat-4 of Caenorhabditis elegans.